The following is a 36-amino-acid chain: U14-myrmicitoxin-Tb1a (36 aa).

Positions 1-23 are cleaved as a signal peptide; it reads MKIIKLITIFTMMATLMXXVANG. Positions 24 to 25 are excised as a propeptide; sequence EP. Glutamine 35 is modified (glutamine amide).

Expressed by the venom gland.

The protein resides in the secreted. In terms of biological role, venom protein with unknown function. Does not induce paralysis when a high dose is administered by intrathoracic injection into the blowfly Lucilia caesar. The chain is U14-myrmicitoxin-Tb1a from Tetramorium bicarinatum (Tramp ant).